The sequence spans 627 residues: Putative polyketide hydroxylase (627 aa).

FAD-binding positions include 22-51 and 309-319; these read PVLVVGGSLVGLSTSVFLGRLGVRHTLVER and YRSGRVLLAGD. The segment at 370–469 is disordered; it reads AEATSARAAH…GGGPGGGGPQ (100 aa). Residues 395-469 are compositionally biased toward gly residues; the sequence is AGGGGPGAGT…GGGPGGGGPQ (75 aa).

This sequence belongs to the PheA/TfdB FAD monooxygenase family. Requires FAD as cofactor.

In terms of biological role, involved in developmentally regulated synthesis of a compound biosynthetically related to polyketide antibiotics which is essential for spore color in Streptococcus coelicolor. The chain is Putative polyketide hydroxylase from Streptomyces coelicolor (strain ATCC BAA-471 / A3(2) / M145).